Here is a 572-residue protein sequence, read N- to C-terminus: Urease subunit alpha (572 aa).

In terms of domain architecture, Urease spans 134–572 (GGIDSHIHFI…LPLTQRYFLF (439 aa)). Positions 139, 141, and 222 each coordinate Ni(2+). N6-carboxylysine is present on Lys-222. Position 224 (His-224) interacts with substrate. His-251 and His-277 together coordinate Ni(2+). The active-site Proton donor is the His-325. A Ni(2+)-binding site is contributed by Asp-365.

The protein belongs to the metallo-dependent hydrolases superfamily. Urease alpha subunit family. Heterotrimer of UreA (gamma), UreB (beta) and UreC (alpha) subunits. Three heterotrimers associate to form the active enzyme. Ni cation is required as a cofactor. Post-translationally, carboxylation allows a single lysine to coordinate two nickel ions.

It is found in the cytoplasm. It catalyses the reaction urea + 2 H2O + H(+) = hydrogencarbonate + 2 NH4(+). It functions in the pathway nitrogen metabolism; urea degradation; CO(2) and NH(3) from urea (urease route): step 1/1. The polypeptide is Urease subunit alpha (Variovorax paradoxus (strain S110)).